Here is a 345-residue protein sequence, read N- to C-terminus: Ribosomal RNA small subunit methyltransferase C (345 aa).

Belongs to the methyltransferase superfamily. RsmC family. Monomer.

The protein resides in the cytoplasm. The catalysed reaction is guanosine(1207) in 16S rRNA + S-adenosyl-L-methionine = N(2)-methylguanosine(1207) in 16S rRNA + S-adenosyl-L-homocysteine + H(+). In terms of biological role, specifically methylates the guanine in position 1207 of 16S rRNA in the 30S particle. This is Ribosomal RNA small subunit methyltransferase C from Shewanella denitrificans (strain OS217 / ATCC BAA-1090 / DSM 15013).